A 260-amino-acid polypeptide reads, in one-letter code: MSVISMKQLLEAGVHFGHQTRRWNPKMKPFIFTERNGIYIIDLQKTVKLIDNAYNFVKDVAANDGVVLFVGTKKQAQTAIEEEAKRAGQYFVNHRWLGGTLTNWNTIQKRIKRLKDLKAMEEDGTFDRLPKKEVALLNKQKDKLEKFLGGIEDMPHTPDVLFVVDPRKEQIAIKEAQKLNIPVVAMVDTNSDPDQVDVIIPSNDDAIRAVRLITAKMADAVIEGRQGEDEEEASQEVAEGVSKDSLEDLKKSVEEGSNEE.

Residues 223 to 260 form a disordered region; sequence EGRQGEDEEEASQEVAEGVSKDSLEDLKKSVEEGSNEE. Positions 241–254 are enriched in basic and acidic residues; sequence VSKDSLEDLKKSVE.

The protein belongs to the universal ribosomal protein uS2 family.

The sequence is that of Small ribosomal subunit protein uS2 from Pediococcus pentosaceus (strain ATCC 25745 / CCUG 21536 / LMG 10740 / 183-1w).